A 1024-amino-acid polypeptide reads, in one-letter code: Beta-galactosidase (1024 aa).

The substrate site is built by asparagine 103 and aspartate 202. Aspartate 202 provides a ligand contact to Na(+). Positions 417, 419, and 462 each coordinate Mg(2+). Substrate contacts are provided by residues glutamate 462 and 538–541; that span reads EYAH. Glutamate 462 (proton donor) is an active-site residue. Catalysis depends on glutamate 538, which acts as the Nucleophile. Residue asparagine 598 coordinates Mg(2+). Residues phenylalanine 602 and asparagine 605 each coordinate Na(+). The substrate site is built by asparagine 605 and tryptophan 1000.

This sequence belongs to the glycosyl hydrolase 2 family. As to quaternary structure, homotetramer. The cofactor is Mg(2+). It depends on Na(+) as a cofactor.

The enzyme catalyses Hydrolysis of terminal non-reducing beta-D-galactose residues in beta-D-galactosides.. This is Beta-galactosidase from Shigella dysenteriae serotype 1 (strain Sd197).